Here is a 411-residue protein sequence, read N- to C-terminus: LL-diaminopimelate aminotransferase (411 aa).

The substrate site is built by Tyr-15 and Gly-42. Residues Tyr-72, 108–109 (SK), Tyr-132, Asn-187, Tyr-218, and 246–248 (SFS) each bind pyridoxal 5'-phosphate. Lys-109, Tyr-132, and Asn-187 together coordinate substrate. Lys-249 bears the N6-(pyridoxal phosphate)lysine mark. The pyridoxal 5'-phosphate site is built by Arg-257 and Asn-292. Substrate-binding residues include Asn-292 and Arg-388.

Belongs to the class-I pyridoxal-phosphate-dependent aminotransferase family. LL-diaminopimelate aminotransferase subfamily. In terms of assembly, homodimer. The cofactor is pyridoxal 5'-phosphate.

The catalysed reaction is (2S,6S)-2,6-diaminopimelate + 2-oxoglutarate = (S)-2,3,4,5-tetrahydrodipicolinate + L-glutamate + H2O + H(+). The protein operates within amino-acid biosynthesis; L-lysine biosynthesis via DAP pathway; LL-2,6-diaminopimelate from (S)-tetrahydrodipicolinate (aminotransferase route): step 1/1. In terms of biological role, involved in the synthesis of meso-diaminopimelate (m-DAP or DL-DAP), required for both lysine and peptidoglycan biosynthesis. Catalyzes the direct conversion of tetrahydrodipicolinate to LL-diaminopimelate. The sequence is that of LL-diaminopimelate aminotransferase from Citrifermentans bemidjiense (strain ATCC BAA-1014 / DSM 16622 / JCM 12645 / Bem) (Geobacter bemidjiensis).